The primary structure comprises 310 residues: Cysteine synthase (310 aa).

Lysine 44 carries the N6-(pyridoxal phosphate)lysine modification. Pyridoxal 5'-phosphate is bound by residues asparagine 74, 179–183, and serine 267; that span reads GTGGT.

This sequence belongs to the cysteine synthase/cystathionine beta-synthase family. The cofactor is pyridoxal 5'-phosphate.

The enzyme catalyses O-acetyl-L-serine + hydrogen sulfide = L-cysteine + acetate. The protein operates within amino-acid biosynthesis; L-cysteine biosynthesis; L-cysteine from L-serine: step 2/2. The protein is Cysteine synthase (cysK) of Neisseria meningitidis serogroup B (strain ATCC BAA-335 / MC58).